The primary structure comprises 217 residues: MLO-like protein (217 aa).

Transmembrane regions (helical) follow at residues 35 to 55, 59 to 79, and 119 to 139; these read FKVV…FLLS, GWVA…VVGT, and LVLF…AFFI.

This sequence belongs to the MLO family.

Its subcellular location is the membrane. Its function is as follows. May be involved in modulation of pathogen defense and leaf cell death. This Linum usitatissimum (Flax) protein is MLO-like protein.